Consider the following 375-residue polypeptide: 3-dehydroquinate synthase (375 aa).

NAD(+)-binding positions include 82-87 (SGETSK), 116-120 (GVVGD), 140-141 (TT), K153, and K162. Zn(2+)-binding residues include E195, H259, and H276.

Belongs to the sugar phosphate cyclases superfamily. Dehydroquinate synthase family. NAD(+) is required as a cofactor. Requires Co(2+) as cofactor. It depends on Zn(2+) as a cofactor.

It localises to the cytoplasm. The enzyme catalyses 7-phospho-2-dehydro-3-deoxy-D-arabino-heptonate = 3-dehydroquinate + phosphate. It functions in the pathway metabolic intermediate biosynthesis; chorismate biosynthesis; chorismate from D-erythrose 4-phosphate and phosphoenolpyruvate: step 2/7. Functionally, catalyzes the conversion of 3-deoxy-D-arabino-heptulosonate 7-phosphate (DAHP) to dehydroquinate (DHQ). The chain is 3-dehydroquinate synthase from Rhodopirellula baltica (strain DSM 10527 / NCIMB 13988 / SH1).